Consider the following 170-residue polypeptide: Putative 4-hydroxy-4-methyl-2-oxoglutarate aldolase (170 aa).

Substrate-binding positions include 85–88 and Arg107; that span reads GDMI. Asp108 is an a divalent metal cation binding site.

This sequence belongs to the class II aldolase/RraA-like family. As to quaternary structure, homotrimer. Requires a divalent metal cation as cofactor.

The catalysed reaction is 4-hydroxy-4-methyl-2-oxoglutarate = 2 pyruvate. The enzyme catalyses oxaloacetate + H(+) = pyruvate + CO2. In terms of biological role, catalyzes the aldol cleavage of 4-hydroxy-4-methyl-2-oxoglutarate (HMG) into 2 molecules of pyruvate. Also contains a secondary oxaloacetate (OAA) decarboxylase activity due to the common pyruvate enolate transition state formed following C-C bond cleavage in the retro-aldol and decarboxylation reactions. This Acinetobacter baylyi (strain ATCC 33305 / BD413 / ADP1) protein is Putative 4-hydroxy-4-methyl-2-oxoglutarate aldolase.